A 186-amino-acid polypeptide reads, in one-letter code: PRKR-interacting protein 1 (186 aa).

The interaction with EIF2AK2 stretch occupies residues 1-50 (MASSAASSVRPPRPKKEPQALIIPKNAAEEQKLKLERLMKNPDKAVPIPE). Disordered regions lie at residues 39-61 (MKNP…RPPP) and 119-186 (AAEE…ITGR). Residues 51 to 143 (KMSEWAPRPP…LKEKKLLAKK (93 aa)) are required for RNA-binding. Residues 86–153 (RRREYQRQDY…MKLEQKKQSE (68 aa)) adopt a coiled-coil conformation. Positions 126 to 138 (KRRKKRQKLKEKK) are required for nuclear localization. The segment covering 126–143 (KRRKKRQKLKEKKLLAKK) has biased composition (basic residues). Residues 153 to 162 (EASSETQEQP) are compositionally biased toward polar residues. Residues 170-179 (SGTEDEEEDA) show a composition bias toward acidic residues.

The protein belongs to the PRKRIP1 family. In terms of assembly, component of the pre-catalytic and post-catalytic spliceosome complexes. Interacts with EIF2AK2.

It is found in the nucleus. The protein resides in the nucleolus. Functionally, required for pre-mRNA splicing as component of the spliceosome. Binds double-stranded RNA. Inhibits EIF2AK2 kinase activity. This is PRKR-interacting protein 1 (PRKRIP1) from Bos taurus (Bovine).